Reading from the N-terminus, the 288-residue chain is Nickel/cobalt efflux system RcnA (288 aa).

Over 1–12 the chain is Periplasmic; that stretch reads MGEFSTLLQQGN. The chain crosses the membrane as a helical span at residues 13–33; that stretch reads AWFFIPSAILLGVLHGLEPGH. Residues 34 to 51 lie on the Cytoplasmic side of the membrane; it reads SKTMMAAFIIAIKGTIKQ. Residues 52 to 72 traverse the membrane as a helical segment; that stretch reads AVMLGLAATLSHTAVVWLIAL. The Periplasmic portion of the chain corresponds to 73 to 85; sequence GGMYVSRAFTAES. Residues 86-106 form a helical membrane-spanning segment; it reads VEPWLQLVSAIIILSTAFWMF. The Cytoplasmic portion of the chain corresponds to 107-188; sequence WRTWKGERDG…FHDREVTNGQ (82 aa). A compositionally biased stretch (basic residues) spans 125–137; sequence THHHHDHEHHHHD. The interval 125–144 is disordered; it reads THHHHDHEHHHHDHDHDHHH. The helical transmembrane segment at 189–209 threads the bilayer; the sequence is ILLFGLTGGLIPCPAAITVLL. Residues 210–223 lie on the Periplasmic side of the membrane; it reads ICIQLKAFTLGATM. The chain crosses the membrane as a helical span at residues 224–244; that stretch reads VLCFSIGLALTLVAVGVGAAI. Over 245–266 the chain is Cytoplasmic; that stretch reads SVQQAAKRWSGFNTLARKAPYF. Residues 267-287 form a helical membrane-spanning segment; the sequence is SSILIGLVGLYMGMHGYLGII. A topological domain (periplasmic) is located at residue Arg288.

This sequence belongs to the NiCoT transporter (TC 2.A.52) family. RcnA subfamily.

It is found in the cell inner membrane. Its function is as follows. Efflux system for nickel and cobalt. In Citrobacter koseri (strain ATCC BAA-895 / CDC 4225-83 / SGSC4696), this protein is Nickel/cobalt efflux system RcnA (rcnA).